The sequence spans 717 residues: Ubiquitin carboxyl-terminal hydrolase 11 (717 aa).

Residues A231–K268 form a disordered region. Low complexity predominate over residues S242–S257. Residues K258–K268 show a composition bias toward basic and acidic residues. The 410-residue stretch at T298–M707 folds into the USP domain. C307 (nucleophile) is an active-site residue. A disordered region spans residues K531–N577. The segment covering S549–H564 has biased composition (basic residues). H649 functions as the Proton acceptor in the catalytic mechanism.

This sequence belongs to the peptidase C19 family.

It catalyses the reaction Thiol-dependent hydrolysis of ester, thioester, amide, peptide and isopeptide bonds formed by the C-terminal Gly of ubiquitin (a 76-residue protein attached to proteins as an intracellular targeting signal).. The chain is Ubiquitin carboxyl-terminal hydrolase 11 (UBP11) from Saccharomyces cerevisiae (strain ATCC 204508 / S288c) (Baker's yeast).